We begin with the raw amino-acid sequence, 311 residues long: ADP-ribosyl cyclase/cyclic ADP-ribose hydrolase 2 (311 aa).

An N-terminal signal peptide occupies residues 1-24 (MAVQGGLLSLWLWLWLSLLTVLLG). 3 cysteine pairs are disulfide-bonded: Cys-46/Cys-60, Cys-76/Cys-156, and Cys-137/Cys-150. Residues Asn-59 and Asn-88 are each glycosylated (N-linked (GlcNAc...) asparagine). Trp-102 is a binding site for NAD(+). Position 102 (Trp-102) interacts with nicotinamide. Asn-141 is a glycosylation site (N-linked (GlcNAc...) asparagine). Trp-165 is an NAD(+) binding site. Asn-185 carries N-linked (GlcNAc...) asparagine glycosylation. Glu-203 is a binding site for NAD(+). Disulfide bonds link Cys-231-Cys-252 and Cys-264-Cys-273. Ser-286 carries GPI-anchor amidated serine lipidation. Residues 287 to 311 (ASLHAIGDASLLISLLVALASSSQA) constitute a propeptide that is removed on maturation.

Belongs to the ADP-ribosyl cyclase family. As to quaternary structure, homodimer. In terms of tissue distribution, expressed in the bone marrow, spleen and thymus in lymphoid organs, and the lung, kidney and heart in non-lymphoid organs.

The protein resides in the cell membrane. It carries out the reaction NAD(+) + H2O = ADP-D-ribose + nicotinamide + H(+). The enzyme catalyses NAD(+) = cyclic ADP-beta-D-ribose + nicotinamide + H(+). It catalyses the reaction cyclic ADP-beta-D-ribose + H2O = ADP-D-ribose. Functionally, catalyzes both the synthesis of cyclic ADP-beta-D-ribose (cADPR) from NAD(+), and its hydrolysis to ADP-D-ribose (ADPR). Cyclic ADPR is known to serve as an endogenous second messenger that elicits calcium release from intracellular stores, and thus regulates the mobilization of intracellular calcium. May be involved in pre-B-cell growth. This Mus musculus (Mouse) protein is ADP-ribosyl cyclase/cyclic ADP-ribose hydrolase 2 (Bst1).